The sequence spans 169 residues: Lipoprotein signal peptidase (169 aa).

4 consecutive transmembrane segments (helical) span residues 15-35 (WLWL…VVMN), 47-67 (ILPF…SFLS), 75-95 (WLFT…MSKL), and 107-127 (AMII…GFVV). Active-site residues include D128 and D146. The chain crosses the membrane as a helical span at residues 141-161 (AFNLADMAICLGAAMIILDGF).

It belongs to the peptidase A8 family.

The protein resides in the cell inner membrane. It carries out the reaction Release of signal peptides from bacterial membrane prolipoproteins. Hydrolyzes -Xaa-Yaa-Zaa-|-(S,diacylglyceryl)Cys-, in which Xaa is hydrophobic (preferably Leu), and Yaa (Ala or Ser) and Zaa (Gly or Ala) have small, neutral side chains.. The protein operates within protein modification; lipoprotein biosynthesis (signal peptide cleavage). This protein specifically catalyzes the removal of signal peptides from prolipoproteins. The sequence is that of Lipoprotein signal peptidase from Vibrio parahaemolyticus serotype O3:K6 (strain RIMD 2210633).